The chain runs to 517 residues: Tyrosine-protein kinase Fgr (517 aa).

Residue Gly-2 is the site of N-myristoyl glycine attachment. S-palmitoyl cysteine attachment occurs at residues Cys-3 and Cys-6. The residue at position 13 (Ser-13) is a Phosphoserine. Tyr-32 is modified (phosphotyrosine). Ser-50 carries the post-translational modification Phosphoserine. In terms of domain architecture, SH3 spans 65–126 (TGVTIFVALY…PSNYVAPVDS (62 aa)). The interval 102 to 103 (WW) is interaction with CLNK. In terms of domain architecture, SH2 spans 132 to 229 (WYFGKISRKD…GLCYLLTAPC (98 aa)). Tyr-196 bears the Phosphotyrosine mark. Ser-206 is modified (phosphoserine). A Protein kinase domain is found at 251-504 (IALERRLGTG…YLQSFLEDYF (254 aa)). ATP contacts are provided by residues 257-265 (LGTGCFGDV) and Lys-279. The active-site Proton acceptor is Asp-370. Tyr-400 is modified (phosphotyrosine). A Phosphotyrosine; by SRC modification is found at Tyr-511.

This sequence belongs to the protein kinase superfamily. Tyr protein kinase family. SRC subfamily. As to quaternary structure, interacts with ITGB1, ITGB2, MS4A2/FCER1B, FCER1G and FCGR2. Interacts (via SH2 domain) with SYK (tyrosine phosphorylated). Interacts (via SH2 domain) with FLT3 (tyrosine phosphorylated). Interacts with PTK2/FAK1. Interacts (via SH2 domain) with HCLS1 (tyrosine phosphorylated by SYK). Interacts with SIRPA and PTPNS1. Interacts (not phosphorylated on tyrosine residues) with CBL; FGR tyrosine phosphorylation promotes dissociation. Interacts with CLNK. In terms of processing, ubiquitinated. Becomes ubiquitinated in response to ITGB2 signaling; this does not lead to degradation. Post-translationally, phosphorylated. Autophosphorylated on tyrosine residues. Becomes phosphorylated in response to FCGR2 engagement, cell adhesion and signaling by ITGB2. Prior phosphorylation at Tyr-511 by SRC inhibits ulterior autophosphorylation at Tyr-400. Expressed in natural killer cells (at protein level).

Its subcellular location is the cell membrane. The protein resides in the cell projection. It is found in the ruffle membrane. The protein localises to the cytoplasm. It localises to the cytosol. Its subcellular location is the cytoskeleton. The protein resides in the mitochondrion inner membrane. It is found in the mitochondrion intermembrane space. It carries out the reaction L-tyrosyl-[protein] + ATP = O-phospho-L-tyrosyl-[protein] + ADP + H(+). Its activity is regulated as follows. Activated by autophosphorylation. Prior phosphorylation at Tyr-511 by SRC inhibits ulterior autophosphorylation at Tyr-400. Activated by phorbol myristate acetate, phosphatidic acid and poly-Lys. Binding (via SH2 domain) of HCLS1 that is already phosphorylated by SYK strongly increases kinase activity. In terms of biological role, non-receptor tyrosine-protein kinase that transmits signals from cell surface receptors devoid of kinase activity and contributes to the regulation of immune responses, including neutrophil, monocyte, macrophage and mast cell functions, cytoskeleton remodeling in response to extracellular stimuli, phagocytosis, cell adhesion and migration. Promotes mast cell degranulation, release of inflammatory cytokines and IgE-mediated anaphylaxis. Acts downstream of receptors that bind the Fc region of immunoglobulins, such as MS4A2/FCER1B, FCER1G and FCGR2. Acts downstream of ITGB1 and ITGB2, and regulates actin cytoskeleton reorganization, cell spreading and adhesion. Depending on the context, activates or inhibits cellular responses. Functions as a negative regulator of ITGB2 signaling, phagocytosis and SYK activity in monocytes. Required for normal ITGB1 and ITGB2 signaling, normal cell spreading and adhesion in neutrophils and macrophages. Functions as a positive regulator of cell migration and regulates cytoskeleton reorganization via RAC1 activation. Phosphorylates SYK (in vitro) and promotes SYK-dependent activation of AKT1 and MAP kinase signaling. Phosphorylates PLD2 in antigen-stimulated mast cells, leading to PLD2 activation and the production of the signaling molecules lysophosphatidic acid and diacylglycerol. Promotes activation of PIK3R1. Phosphorylates FASLG, and thereby regulates its ubiquitination and subsequent internalization. Phosphorylates ABL1. Promotes phosphorylation of CBL, CTTN, PIK3R1, PTK2/FAK1, PTK2B/PYK2 and VAV2. Phosphorylates HCLS1 that has already been phosphorylated by SYK, but not unphosphorylated HCLS1. Together with CLNK, it acts as a negative regulator of natural killer cell-activating receptors and inhibits interferon-gamma production. This chain is Tyrosine-protein kinase Fgr (Fgr), found in Mus musculus (Mouse).